The primary structure comprises 516 residues: Extracellular endo-inulinase inu2 (516 aa).

Residues 1-23 (MLNPKVAYMVWMTCLGLTLPSQA) form the signal peptide. Substrate is bound by residues 41–43 (MNE) and asparagine 61. Glutamate 43 is a catalytic residue. 2 N-linked (GlcNAc...) asparagine glycosylation sites follow: asparagine 108 and asparagine 109. Residue aspartate 176 coordinates substrate. A glycan (N-linked (GlcNAc...) asparagine) is linked at asparagine 210. Asparagine 320 provides a ligand contact to substrate. A glycan (N-linked (GlcNAc...) asparagine) is linked at asparagine 372.

Belongs to the glycosyl hydrolase 32 family.

The protein localises to the secreted. It carries out the reaction Endohydrolysis of (2-&gt;1)-beta-D-fructosidic linkages in inulin.. Endo-inulinase involved in utilization of the plant storage polymer inulin, consisting of fructooligosaccharides with a degree of polymerization (DP) value from 2 to 60. In Aspergillus ficuum, this protein is Extracellular endo-inulinase inu2 (inu2).